A 258-amino-acid polypeptide reads, in one-letter code: Aquaglyceroporin (258 aa).

Residues 1 to 16 (MKVTFGNEYIKNFLGE) lie on the Cytoplasmic side of the membrane. Residues 17-37 (FIGTFVLMFLGEGTTANHFAV) traverse the membrane as a helical segment. Residues 38–45 (PIKNDWLR) are Extracellular-facing. Residues 46–66 (LCIGWGLGVFFGILISAKLSG) form a helical membrane-spanning segment. Ala67 and Asn70 together coordinate glycerol. The Cytoplasmic portion of the chain corresponds to 67–87 (AHLNLAVTVGLSTIKKFNYKQ). A helical membrane pass occupies residues 88-108 (IPLYFAGQLLGALSATASVYG). The Extracellular segment spans residues 109 to 133 (LYYGFVSDQTIPKFSWETGKHANVH). Residues 134–154 (IASAFMHEFILTGILLLIILS) traverse the membrane as a helical segment. Topologically, residues 155 to 171 (VTDENICGKFHVLKVSS) are cytoplasmic. A helical transmembrane segment spans residues 172–192 (IVGLAIICIGISFGGNTGFAL). Residues Gly189, Phe190, Asn193, and Arg196 each coordinate glycerol. The Extracellular portion of the chain corresponds to 193–217 (NPSRDLGARILSAIAYGFEAFTRDK). Residues 218–238 (CYFWIPLIAPIIGSIIFCQIY) traverse the membrane as a helical segment. Residues 239–258 (DKIVAPLVVISEHDKGALEI) are Cytoplasmic-facing.

Belongs to the MIP/aquaporin (TC 1.A.8) family.

It localises to the cell membrane. The enzyme catalyses H2O(in) = H2O(out). The catalysed reaction is glycerol(in) = glycerol(out). It carries out the reaction urea(in) = urea(out). In terms of biological role, mediates water and glycerol transport across the cell membrane. Permeable to urea. Required for efficient progression of parasites through the liver stages. The polypeptide is Aquaglyceroporin (Plasmodium berghei (strain Anka)).